Reading from the N-terminus, the 221-residue chain is Inositol phosphorylceramide synthase regulatory subunit KEI1 (221 aa).

4 helical membrane passes run 11-31 (SFLG…ISIL), 54-74 (WIAY…LYLI), 79-99 (LLVF…TCFF), and 154-174 (ILIT…LASF). Residues 176 to 221 (QELLHHPKYLVDRDDVEQNLKNKPIWKRLWAKSQKGCYKLCKNLLE) form a COPI vesicle-binding region.

The protein belongs to the KEI1 family. As to quaternary structure, component of the inositol phosphorylceramide synthase complex composed of at least AUR1 and KEI1. Interacts (via C-terminal region) with COP1 and SEC21. Note=The interaction with AUR1 seems to occur with the full-length protein before cleavage by KEX2 since both full-length and short chains of KEI1 interact with AUR1. In terms of processing, the precursor protein is cleaved into two polypeptide chains, KEI1N and KEI1C. The cleavage is performed in the Golgi apparatus by the KEX2 protease which recognizes residue Arg-135. Generation of KEX2 cleavage site may have been an accidental event in evolution without specific advantages or disadvantages in IPC synthesis.

Its subcellular location is the golgi apparatus membrane. In terms of biological role, regulatory component of the inositol phosphorylceramide (ICP) synthase which catalyzes the addition of a phosphorylinositol group onto ceramide to form inositol phosphorylceramide, an essential step in sphingolipid biosynthesis. Helps the medial Golgi localization of IPC synthase in a COPI vesicle-dependent manner. The polypeptide is Inositol phosphorylceramide synthase regulatory subunit KEI1 (KEI1) (Saccharomyces cerevisiae (strain ATCC 204508 / S288c) (Baker's yeast)).